The following is a 316-amino-acid chain: Glutamyl endopeptidase (316 aa).

The first 30 residues, 1 to 30, serve as a signal peptide directing secretion; the sequence is MVSKKSVKRGLITGLIGISIYSLGMHPAQA. Positions 31 to 94 are excised as a propeptide; that stretch reads APSPHTPVSS…SPAKAPYSIK (64 aa). Cys126 and Cys142 form a disulfide bridge. Active-site charge relay system residues include His141 and Ser261. A disulfide bridge links Cys275 with Cys279.

It belongs to the peptidase S1B family.

The protein resides in the secreted. The enzyme catalyses Preferential cleavage: Glu-|-Xaa, Asp-|-Xaa.. Its function is as follows. Specific for hydrolysis of peptide bonds on the carboxyl side of acidic amino acid residues, with a strong preference for Glu. The sequence is that of Glutamyl endopeptidase (blaSE) from Bacillus licheniformis (strain ATCC 14580 / DSM 13 / JCM 2505 / CCUG 7422 / NBRC 12200 / NCIMB 9375 / NCTC 10341 / NRRL NRS-1264 / Gibson 46).